We begin with the raw amino-acid sequence, 108 residues long: Large ribosomal subunit protein P2A (108 aa).

The tract at residues 62-108 (LSSVPSGAPAAAAGGASAAAGGEATEEAAEEEAAEESDDDMSFGLFD) is disordered. The span at 68–84 (GAPAAAAGGASAAAGGE) shows a compositional bias: low complexity. The segment covering 85 to 102 (ATEEAAEEEAAEESDDDM) has biased composition (acidic residues). The residue at position 98 (Ser-98) is a Phosphoserine.

The protein belongs to the eukaryotic ribosomal protein P1/P2 family.

Its function is as follows. Plays an important role in the elongation step of protein synthesis. This chain is Large ribosomal subunit protein P2A (RPP2A), found in Candida albicans (Yeast).